The chain runs to 323 residues: MMNILLPLLGGFIITAAFMPALIRYFRARHEGQMIREEGPTWHEKKSGTPTMGGLLFIVAIAVMTLLTSWVLAPHHMLPTTWILIFILVLYGALGMWDDSIKLFHRQNEGLKAWQKMLGQIVGALILFWVYTHEQLPMALHVPGIGNWHMSGWYAVFVILWLVGFSNAVNLSDGLDGLVSGLASIAFAAYGIVAWQQAQINIAIFCFAVVGSLLGFLIFNHKPAKIFMGDTGSLALGGALAAVSILLHHELSLLWIGLIFVIETASVILQVASFKLTGKRIFLMSPIHHHFEMKGWSEWRIDLTFWGIGLVTALSGVWVILAK.

The next 9 membrane-spanning stretches (helical) occupy residues Asn3–Ile23, Met52–Leu72, Met77–Trp97, Ile121–His141, Ile145–Phe165, Leu175–Trp195, Ile200–Asn220, Ile226–His248, and Ile301–Leu321.

This sequence belongs to the glycosyltransferase 4 family. MraY subfamily. It depends on Mg(2+) as a cofactor.

The protein localises to the cell membrane. It catalyses the reaction UDP-N-acetyl-alpha-D-muramoyl-L-alanyl-gamma-D-glutamyl-L-lysyl-D-alanyl-D-alanine + di-trans,octa-cis-undecaprenyl phosphate = Mur2Ac(oyl-L-Ala-gamma-D-Glu-L-Lys-D-Ala-D-Ala)-di-trans,octa-cis-undecaprenyl diphosphate + UMP. It functions in the pathway cell wall biogenesis; peptidoglycan biosynthesis. Its function is as follows. Catalyzes the initial step of the lipid cycle reactions in the biosynthesis of the cell wall peptidoglycan: transfers peptidoglycan precursor phospho-MurNAc-pentapeptide from UDP-MurNAc-pentapeptide onto the lipid carrier undecaprenyl phosphate, yielding undecaprenyl-pyrophosphoryl-MurNAc-pentapeptide, known as lipid I. This Levilactobacillus brevis (strain ATCC 367 / BCRC 12310 / CIP 105137 / JCM 1170 / LMG 11437 / NCIMB 947 / NCTC 947) (Lactobacillus brevis) protein is Phospho-N-acetylmuramoyl-pentapeptide-transferase.